The sequence spans 118 residues: Large ribosomal subunit protein bL19 (118 aa).

Belongs to the bacterial ribosomal protein bL19 family.

Its function is as follows. This protein is located at the 30S-50S ribosomal subunit interface and may play a role in the structure and function of the aminoacyl-tRNA binding site. The chain is Large ribosomal subunit protein bL19 from Herpetosiphon aurantiacus (strain ATCC 23779 / DSM 785 / 114-95).